A 309-amino-acid polypeptide reads, in one-letter code: 4-hydroxy-tetrahydrodipicolinate synthase (309 aa).

Threonine 51 contacts pyruvate. The Proton donor/acceptor role is filled by tyrosine 140. Lysine 168 (schiff-base intermediate with substrate) is an active-site residue. Residue isoleucine 209 coordinates pyruvate.

This sequence belongs to the DapA family. In terms of assembly, homotetramer; dimer of dimers.

It is found in the cytoplasm. It catalyses the reaction L-aspartate 4-semialdehyde + pyruvate = (2S,4S)-4-hydroxy-2,3,4,5-tetrahydrodipicolinate + H2O + H(+). It participates in amino-acid biosynthesis; L-lysine biosynthesis via DAP pathway; (S)-tetrahydrodipicolinate from L-aspartate: step 3/4. Its function is as follows. Catalyzes the condensation of (S)-aspartate-beta-semialdehyde [(S)-ASA] and pyruvate to 4-hydroxy-tetrahydrodipicolinate (HTPA). This Streptococcus uberis (strain ATCC BAA-854 / 0140J) protein is 4-hydroxy-tetrahydrodipicolinate synthase.